Here is a 347-residue protein sequence, read N- to C-terminus: S-adenosylmethionine:tRNA ribosyltransferase-isomerase (347 aa).

Belongs to the QueA family. Monomer.

It is found in the cytoplasm. It carries out the reaction 7-aminomethyl-7-carbaguanosine(34) in tRNA + S-adenosyl-L-methionine = epoxyqueuosine(34) in tRNA + adenine + L-methionine + 2 H(+). It participates in tRNA modification; tRNA-queuosine biosynthesis. Functionally, transfers and isomerizes the ribose moiety from AdoMet to the 7-aminomethyl group of 7-deazaguanine (preQ1-tRNA) to give epoxyqueuosine (oQ-tRNA). The sequence is that of S-adenosylmethionine:tRNA ribosyltransferase-isomerase from Exiguobacterium sibiricum (strain DSM 17290 / CCUG 55495 / CIP 109462 / JCM 13490 / 255-15).